We begin with the raw amino-acid sequence, 357 residues long: tRNA-specific 2-thiouridylase MnmA (357 aa).

ATP contacts are provided by residues 3–10 (AMSGGVDS) and Leu29. Cys98 serves as the catalytic Nucleophile. A disulfide bridge connects residues Cys98 and Cys196. Residue Gly122 participates in ATP binding. The interval 146–148 (KDQ) is interaction with tRNA. The Cysteine persulfide intermediate role is filled by Cys196. Positions 302-303 (RY) are interaction with tRNA.

This sequence belongs to the MnmA/TRMU family.

It is found in the cytoplasm. It catalyses the reaction S-sulfanyl-L-cysteinyl-[protein] + uridine(34) in tRNA + AH2 + ATP = 2-thiouridine(34) in tRNA + L-cysteinyl-[protein] + A + AMP + diphosphate + H(+). In terms of biological role, catalyzes the 2-thiolation of uridine at the wobble position (U34) of tRNA, leading to the formation of s(2)U34. The chain is tRNA-specific 2-thiouridylase MnmA from Moorella thermoacetica (strain ATCC 39073 / JCM 9320).